The sequence spans 256 residues: N-acetyl-D-glucosamine kinase (256 aa).

ATP-binding positions include 4–11 (GFDMGGTK) and 133–140 (GVGGGLIV). Positions 157, 177, 179, and 184 each coordinate Zn(2+).

This sequence belongs to the ROK (NagC/XylR) family. NagK subfamily.

The catalysed reaction is N-acetyl-D-glucosamine + ATP = N-acetyl-D-glucosamine 6-phosphate + ADP + H(+). The protein operates within cell wall biogenesis; peptidoglycan recycling. Its function is as follows. Catalyzes the phosphorylation of N-acetyl-D-glucosamine (GlcNAc) derived from cell-wall degradation, yielding GlcNAc-6-P. This chain is N-acetyl-D-glucosamine kinase (nagK), found in Yersinia pestis bv. Antiqua (strain Nepal516).